We begin with the raw amino-acid sequence, 469 residues long: Serine hydroxymethyltransferase, cytosolic (469 aa).

T20 is modified (phosphothreonine). The residue at position 26 (S26) is a Phosphoserine. At K248 the chain carries N6-(pyridoxal phosphate)lysine. S429 bears the Phosphoserine mark. Residue K456 forms a Glycyl lysine isopeptide (Lys-Gly) (interchain with G-Cter in ubiquitin) linkage.

Belongs to the SHMT family. In terms of assembly, homotetramer. Requires pyridoxal 5'-phosphate as cofactor.

It is found in the cytoplasm. It carries out the reaction (6R)-5,10-methylene-5,6,7,8-tetrahydrofolate + glycine + H2O = (6S)-5,6,7,8-tetrahydrofolate + L-serine. It participates in one-carbon metabolism; tetrahydrofolate interconversion. Functionally, interconversion of serine and glycine. The sequence is that of Serine hydroxymethyltransferase, cytosolic from Saccharomyces cerevisiae (strain ATCC 204508 / S288c) (Baker's yeast).